A 96-amino-acid polypeptide reads, in one-letter code: NADH-ubiquinone oxidoreductase chain 4L (96 aa).

3 consecutive transmembrane segments (helical) span residues 2–22 (LMMF…FVFV), 28–48 (LLSM…LLYI), and 58–78 (FLGM…LSIM).

The protein belongs to the complex I subunit 4L family.

It localises to the mitochondrion membrane. The catalysed reaction is a ubiquinone + NADH + 5 H(+)(in) = a ubiquinol + NAD(+) + 4 H(+)(out). Functionally, core subunit of the mitochondrial membrane respiratory chain NADH dehydrogenase (Complex I) that is believed to belong to the minimal assembly required for catalysis. Complex I functions in the transfer of electrons from NADH to the respiratory chain. The immediate electron acceptor for the enzyme is believed to be ubiquinone. The protein is NADH-ubiquinone oxidoreductase chain 4L (ND4L) of Ceratitis capitata (Mediterranean fruit fly).